A 70-amino-acid chain; its full sequence is DNA gyrase inhibitor YacG (70 aa).

Zn(2+) contacts are provided by Cys9, Cys12, Cys28, and Cys32. The segment at 43-70 (ESRKIPGSSIDPESIVTSNNKQDNEDEQ) is disordered.

This sequence belongs to the DNA gyrase inhibitor YacG family. Interacts with GyrB. Zn(2+) is required as a cofactor.

Its function is as follows. Inhibits all the catalytic activities of DNA gyrase by preventing its interaction with DNA. Acts by binding directly to the C-terminal domain of GyrB, which probably disrupts DNA binding by the gyrase. The chain is DNA gyrase inhibitor YacG from Legionella pneumophila (strain Paris).